Consider the following 340-residue polypeptide: 4-hydroxy-3-methylbut-2-enyl diphosphate reductase (340 aa).

Cysteine 21 serves as a coordination point for [4Fe-4S] cluster. The (2E)-4-hydroxy-3-methylbut-2-enyl diphosphate site is built by histidine 50 and histidine 83. Positions 50 and 83 each coordinate dimethylallyl diphosphate. Isopentenyl diphosphate-binding residues include histidine 50 and histidine 83. Position 105 (cysteine 105) interacts with [4Fe-4S] cluster. Position 133 (histidine 133) interacts with (2E)-4-hydroxy-3-methylbut-2-enyl diphosphate. Position 133 (histidine 133) interacts with dimethylallyl diphosphate. Histidine 133 is an isopentenyl diphosphate binding site. Glutamate 135 acts as the Proton donor in catalysis. Position 173 (threonine 173) interacts with (2E)-4-hydroxy-3-methylbut-2-enyl diphosphate. [4Fe-4S] cluster is bound at residue cysteine 203. The (2E)-4-hydroxy-3-methylbut-2-enyl diphosphate site is built by serine 231, serine 232, asparagine 233, and serine 276. Dimethylallyl diphosphate-binding residues include serine 231, serine 232, asparagine 233, and serine 276. 4 residues coordinate isopentenyl diphosphate: serine 231, serine 232, asparagine 233, and serine 276. A disordered region spans residues lysine 320–arginine 340.

This sequence belongs to the IspH family. [4Fe-4S] cluster serves as cofactor.

It catalyses the reaction isopentenyl diphosphate + 2 oxidized [2Fe-2S]-[ferredoxin] + H2O = (2E)-4-hydroxy-3-methylbut-2-enyl diphosphate + 2 reduced [2Fe-2S]-[ferredoxin] + 2 H(+). The enzyme catalyses dimethylallyl diphosphate + 2 oxidized [2Fe-2S]-[ferredoxin] + H2O = (2E)-4-hydroxy-3-methylbut-2-enyl diphosphate + 2 reduced [2Fe-2S]-[ferredoxin] + 2 H(+). It participates in isoprenoid biosynthesis; dimethylallyl diphosphate biosynthesis; dimethylallyl diphosphate from (2E)-4-hydroxy-3-methylbutenyl diphosphate: step 1/1. It functions in the pathway isoprenoid biosynthesis; isopentenyl diphosphate biosynthesis via DXP pathway; isopentenyl diphosphate from 1-deoxy-D-xylulose 5-phosphate: step 6/6. Its function is as follows. Catalyzes the conversion of 1-hydroxy-2-methyl-2-(E)-butenyl 4-diphosphate (HMBPP) into a mixture of isopentenyl diphosphate (IPP) and dimethylallyl diphosphate (DMAPP). Acts in the terminal step of the DOXP/MEP pathway for isoprenoid precursor biosynthesis. The polypeptide is 4-hydroxy-3-methylbut-2-enyl diphosphate reductase (Acidothermus cellulolyticus (strain ATCC 43068 / DSM 8971 / 11B)).